We begin with the raw amino-acid sequence, 442 residues long: Protein bangles and beads (442 aa).

Residues 47 to 442 (AVEPAPLKPE…SEESSESKEN (396 aa)) are disordered. Basic and acidic residues-rich tracts occupy residues 55-67 (PEAEKPAETKTIE), 114-125 (PEKKTLPEEAKP), and 133-146 (EAEKKQEKTARTEA). Low complexity predominate over residues 159–172 (AIEQAPEAPAANAE). Composition is skewed to basic and acidic residues over residues 177 to 194 (VVDEVKPQEPKIDAKSAE) and 204 to 240 (AEKETPVPEQPARQERINEIEQKDAKKDAAVAEEPAK). Low complexity-rich tracts occupy residues 241–255 (AAEATPTAAPEAATK) and 272–288 (SSPAAAAASPAAQAAQA). Positions 329 to 339 (EAVKEQEKEQP) are enriched in basic and acidic residues. Positions 357–376 (TAAPAGAPEPTAAVAPAAVP) are enriched in low complexity. Over residues 408–442 (EPKKSSEEKSDKSESKVDESSESKESEESSESKEN) the composition is skewed to basic and acidic residues. Ser430, Ser433, Ser436, and Ser437 each carry phosphoserine.

In terms of tissue distribution, expressed in the embryonic CNS, in sets of cells that are segmentally reiterated along the periphery of the nervous system.

May play an important role during development. The protein is Protein bangles and beads (bnb) of Drosophila melanogaster (Fruit fly).